The chain runs to 366 residues: Flagellar P-ring protein (366 aa).

Residues M1–A20 form the signal peptide.

The protein belongs to the FlgI family. As to quaternary structure, the basal body constitutes a major portion of the flagellar organelle and consists of four rings (L,P,S, and M) mounted on a central rod.

It localises to the periplasm. It is found in the bacterial flagellum basal body. Assembles around the rod to form the L-ring and probably protects the motor/basal body from shearing forces during rotation. This chain is Flagellar P-ring protein, found in Escherichia coli O6:H1 (strain CFT073 / ATCC 700928 / UPEC).